Reading from the N-terminus, the 293-residue chain is Ribosomal protein L11 methyltransferase (293 aa).

Residues T145, G166, D188, and N230 each contribute to the S-adenosyl-L-methionine site.

The protein belongs to the methyltransferase superfamily. PrmA family.

Its subcellular location is the cytoplasm. The enzyme catalyses L-lysyl-[protein] + 3 S-adenosyl-L-methionine = N(6),N(6),N(6)-trimethyl-L-lysyl-[protein] + 3 S-adenosyl-L-homocysteine + 3 H(+). Functionally, methylates ribosomal protein L11. The polypeptide is Ribosomal protein L11 methyltransferase (Shewanella baltica (strain OS155 / ATCC BAA-1091)).